A 235-amino-acid polypeptide reads, in one-letter code: MFNNTTTSFGSGPGIVVVPTPATTVPTTDFPGTTITSNSTFIIIGPPPPFPAPPRSIDLTPLKLIFVVIAFVAVPALVYALFFNGPCSSSRRNSSSSRTSSSSDDTPHATVDTPPITETTVTSESGGKFHKDTHSKEIGNECSVCLMVFTDSDELRQLSECKHAFHVLCIETWLKDHPNCPICRTDVSVKQQTEAPNVPVNVNGNVNRSGGNRRVSATSRDDDWRQGLPDASSLV.

A helical membrane pass occupies residues 64–84 (LIFVVIAFVAVPALVYALFFN). The disordered stretch occupies residues 87 to 133 (CSSSRRNSSSSRTSSSSDDTPHATVDTPPITETTVTSESGGKFHKDT). Low complexity predominate over residues 88-103 (SSSRRNSSSSRTSSSS). The segment covering 116 to 125 (ITETTVTSES) has biased composition (polar residues). Residues 142-184 (CSVCLMVFTDSDELRQLSECKHAFHVLCIETWLKDHPNCPICR) form an RING-type; atypical zinc finger. Over residues 201–216 (NVNGNVNRSGGNRRVS) the composition is skewed to low complexity. A disordered region spans residues 201–235 (NVNGNVNRSGGNRRVSATSRDDDWRQGLPDASSLV).

This sequence belongs to the RING-type zinc finger family. ATL subfamily.

The protein localises to the membrane. The enzyme catalyses S-ubiquitinyl-[E2 ubiquitin-conjugating enzyme]-L-cysteine + [acceptor protein]-L-lysine = [E2 ubiquitin-conjugating enzyme]-L-cysteine + N(6)-ubiquitinyl-[acceptor protein]-L-lysine.. It functions in the pathway protein modification; protein ubiquitination. In Arabidopsis thaliana (Mouse-ear cress), this protein is RING-H2 finger protein ATL33 (ATL33).